A 97-amino-acid chain; its full sequence is Exodeoxyribonuclease 7 small subunit (97 aa).

The segment at 1–22 (MAKTASPGATPPDNGTEPLPDN) is disordered.

Belongs to the XseB family. Heterooligomer composed of large and small subunits.

It localises to the cytoplasm. It catalyses the reaction Exonucleolytic cleavage in either 5'- to 3'- or 3'- to 5'-direction to yield nucleoside 5'-phosphates.. In terms of biological role, bidirectionally degrades single-stranded DNA into large acid-insoluble oligonucleotides, which are then degraded further into small acid-soluble oligonucleotides. The polypeptide is Exodeoxyribonuclease 7 small subunit (Burkholderia ambifaria (strain MC40-6)).